Consider the following 507-residue polypeptide: BPI fold-containing family C protein (507 aa).

Residues 1–23 (MCTKTIPVLWGCFLLWNLYVSSS) form the signal peptide. N-linked (GlcNAc...) asparagine glycosylation is found at N79, N92, and N113. C161 and C200 are disulfide-bonded. 7 N-linked (GlcNAc...) asparagine glycosylation sites follow: N213, N225, N257, N301, N355, N372, and N415.

It belongs to the BPI/LBP/Plunc superfamily. BPI/LBP family. Detected in the basal layer of the epidermis from inflammatory skin from psoriasis patients, but not in normal skin.

It localises to the secreted. This Homo sapiens (Human) protein is BPI fold-containing family C protein (BPIFC).